The following is a 257-amino-acid chain: NAD kinase (257 aa).

The active-site Proton acceptor is D46. Residues 46–47, 116–117, D146, A154, and 157–162 each bind NAD(+); these read DG, NE, and TAYNLS.

It belongs to the NAD kinase family. A divalent metal cation is required as a cofactor.

The protein resides in the cytoplasm. The catalysed reaction is NAD(+) + ATP = ADP + NADP(+) + H(+). In terms of biological role, involved in the regulation of the intracellular balance of NAD and NADP, and is a key enzyme in the biosynthesis of NADP. Catalyzes specifically the phosphorylation on 2'-hydroxyl of the adenosine moiety of NAD to yield NADP. This Mesorhizobium japonicum (strain LMG 29417 / CECT 9101 / MAFF 303099) (Mesorhizobium loti (strain MAFF 303099)) protein is NAD kinase.